The sequence spans 499 residues: MRINPTTSGSEVSAVEKKNLGRIVKIIGPVLDVAFPPGKMPNIYNALVVQGRDNEQTNVTCEVQQLLGNNRVRAVAMSDTDGLMRGMEVIDTGAPISVPVGGSTLGRIFNVLGQPVDNLGPVDTNTTSPIHRSAPAFIQLDTKLSIFETGIKVVDLLAPYRRGGKIGLFGGAGVGKTVLIMELINNIAKAHGGVSVFGGVGERTREGNDLYLEMKESGVINEENIPESKVALVYGQMNEPPGARMRVGLTALTMAEYFRDVNEQDVLLFIDNIFRFVQAGSEVSALLGRMPSAVGYQPTLSTEMGSLQERITSTKEGSITSIQAVYVPADDLTDPAPATTFAHLDATTVLSRGLAAKGIYPAVDPLDSTSTMLQPRIVGEEHYETAQRVKQTLQRYKELQDIIAILGLDELSEEDRLTVARARKIERFLSQPFFVAEVFTGSPGKYVGLAETIRGFQSILSGELDGLPEQAFYLVGNIDEATAKAMNLKNLEMESDLKK.

G170–T177 is an ATP binding site.

The protein belongs to the ATPase alpha/beta chains family. In terms of assembly, F-type ATPases have 2 components, CF(1) - the catalytic core - and CF(0) - the membrane proton channel. CF(1) has five subunits: alpha(3), beta(3), gamma(1), delta(1), epsilon(1). CF(0) has four main subunits: a(1), b(1), b'(1) and c(9-12).

Its subcellular location is the plastid. The protein resides in the chloroplast thylakoid membrane. It carries out the reaction ATP + H2O + 4 H(+)(in) = ADP + phosphate + 5 H(+)(out). Its function is as follows. Produces ATP from ADP in the presence of a proton gradient across the membrane. The catalytic sites are hosted primarily by the beta subunits. This Ipomoea purpurea (Common morning glory) protein is ATP synthase subunit beta, chloroplastic.